The sequence spans 357 residues: Fructose-1,6-bisphosphatase class 1 2 (357 aa).

Residues glutamate 90, aspartate 112, leucine 114, and aspartate 115 each coordinate Mg(2+). Residues 115 to 118 (DGSS) and asparagine 206 contribute to the substrate site. Residue glutamate 278 coordinates Mg(2+).

It belongs to the FBPase class 1 family. Homotetramer. Mg(2+) is required as a cofactor.

It localises to the cytoplasm. It catalyses the reaction beta-D-fructose 1,6-bisphosphate + H2O = beta-D-fructose 6-phosphate + phosphate. The protein operates within carbohydrate biosynthesis; gluconeogenesis. The chain is Fructose-1,6-bisphosphatase class 1 2 from Dechloromonas aromatica (strain RCB).